The primary structure comprises 500 residues: Pentatricopeptide repeat-containing protein At1g06580 (500 aa).

PPR repeat units lie at residues 78-112 (SIVD…GISH), 113-147 (DLYS…GFEP), 148-182 (SIVT…GYEP), 183-217 (NVVI…GIRP), 218-252 (DVVT…GISP), 253-287 (DVIT…SVNP), 288-322 (NIVT…GFFP), 323-357 (NAVT…GVDG), 358-392 (DTFT…GVHP), 393-427 (DMYT…KTVV), 428-462 (GIIT…GVSP), and 463-498 (DVIT…GLMP).

The protein belongs to the PPR family. P subfamily.

This chain is Pentatricopeptide repeat-containing protein At1g06580, found in Arabidopsis thaliana (Mouse-ear cress).